We begin with the raw amino-acid sequence, 175 residues long: Urease accessory protein UreE (175 aa).

Positions 151 to 175 (GGAYGGSPSHAHRHSHVHSHSHETP) are disordered. Basic residues predominate over residues 160 to 169 (HAHRHSHVHS).

This sequence belongs to the UreE family.

It is found in the cytoplasm. Involved in urease metallocenter assembly. Binds nickel. Probably functions as a nickel donor during metallocenter assembly. This chain is Urease accessory protein UreE, found in Synechococcus sp. (strain WH7805).